The chain runs to 154 residues: Ribosome maturation factor RimP (154 aa).

It belongs to the RimP family.

Its subcellular location is the cytoplasm. Functionally, required for maturation of 30S ribosomal subunits. The chain is Ribosome maturation factor RimP from Desulforudis audaxviator (strain MP104C).